The chain runs to 359 residues: uncharacterized protein (359 aa).

This is an uncharacterized protein from Treponema pallidum (strain Nichols).